The following is a 340-amino-acid chain: Tetraacyldisaccharide 4'-kinase (340 aa).

47–54 provides a ligand contact to ATP; it reads SVGGTGKT.

Belongs to the LpxK family.

The catalysed reaction is a lipid A disaccharide + ATP = a lipid IVA + ADP + H(+). Its pathway is glycolipid biosynthesis; lipid IV(A) biosynthesis; lipid IV(A) from (3R)-3-hydroxytetradecanoyl-[acyl-carrier-protein] and UDP-N-acetyl-alpha-D-glucosamine: step 6/6. Transfers the gamma-phosphate of ATP to the 4'-position of a tetraacyldisaccharide 1-phosphate intermediate (termed DS-1-P) to form tetraacyldisaccharide 1,4'-bis-phosphate (lipid IVA). This Flavobacterium johnsoniae (strain ATCC 17061 / DSM 2064 / JCM 8514 / BCRC 14874 / CCUG 350202 / NBRC 14942 / NCIMB 11054 / UW101) (Cytophaga johnsonae) protein is Tetraacyldisaccharide 4'-kinase.